The chain runs to 251 residues: Hydroxyacylglutathione hydrolase (251 aa).

Zn(2+) is bound by residues His-53, His-55, Asp-57, His-58, His-110, Asp-127, and His-165.

Belongs to the metallo-beta-lactamase superfamily. Glyoxalase II family. Monomer. Requires Zn(2+) as cofactor.

It catalyses the reaction an S-(2-hydroxyacyl)glutathione + H2O = a 2-hydroxy carboxylate + glutathione + H(+). Its pathway is secondary metabolite metabolism; methylglyoxal degradation; (R)-lactate from methylglyoxal: step 2/2. Its function is as follows. Thiolesterase that catalyzes the hydrolysis of S-D-lactoyl-glutathione to form glutathione and D-lactic acid. In Yersinia enterocolitica serotype O:8 / biotype 1B (strain NCTC 13174 / 8081), this protein is Hydroxyacylglutathione hydrolase.